We begin with the raw amino-acid sequence, 780 residues long: RNA-binding protein Pasilla (780 aa).

Disordered stretches follow at residues 31–50 (LQHQ…QQLE), 76–113 (QPRH…SSSI), and 150–190 (QIES…ATAS). Low complexity-rich tracts occupy residues 79-91 (HSTT…STHS), 99-113 (SSNS…SSSI), and 176-190 (PNGT…ATAS). KH domains lie at 273 to 340 (TYHM…MEFI), 366 to 432 (DKQV…CKMI), and 691 to 758 (KDSK…QYLI). A disordered region spans residues 674–693 (AQLGGLSKSPTPGDLSSKDS). The tract at residues 686–776 (GDLSSKDSKN…TKRARQIPLT (91 aa)) is required for RNA binding.

In terms of tissue distribution, expressed in the central nervous system in mushroom body neurons (at protein level).

The protein resides in the nucleus. Its subcellular location is the cytoplasm. Its function is as follows. Functions to regulate alternative splicing in neurons by binding pre-mRNA in a sequence-specific manner to activate exon inclusion. Plays a role in long-term memory formation by processing the unspliced Orb2-isoform A (Orb2A) mRNA and thereby controlling Orb2A protein abundance. This chain is RNA-binding protein Pasilla, found in Drosophila melanogaster (Fruit fly).